A 130-amino-acid polypeptide reads, in one-letter code: Holin-like protein CidA (130 aa).

4 helical membrane passes run 6–26 (FVIK…IGTE), 31–51 (LHIP…LLQF), 65–85 (FLLK…MDVA), and 93–113 (ILFF…SGYI).

It belongs to the CidA/LrgA family. CidA subfamily.

Its subcellular location is the cell membrane. Increases the activity of extracellular murein hydrolases possibly by mediating their export via hole formation. Inhibited by the antiholin-like proteins LrgAB. In an unstressed cell, the LrgAB products probably inhibit the function of the CidAB proteins. When a cell is stressed by the addition of antibiotics or by other factors in the environment, the CidAB proteins possibly oligomerize within the bacterial cell membrane, creating lesions that disrupt the proton motive force, which in turn results in loss of cell viability. These lesions are also hypothesized to regulate the subsequent cell lysis by either allowing the murein hydrolases access to the cell wall substrate and/or regulating their activity by a possible change in the cell wall pH that results from loss of membrane potential. The sequence is that of Holin-like protein CidA from Staphylococcus epidermidis (strain ATCC 35984 / DSM 28319 / BCRC 17069 / CCUG 31568 / BM 3577 / RP62A).